The chain runs to 220 residues: Flavin-dependent thymidylate synthase (220 aa).

Residues 1 to 208 form the ThyX domain; that stretch reads MKIDILDKGF…PWTFEAFLKY (208 aa). FAD contacts are provided by residues T55, 78-81, and E86; that span reads RHRI. DUMP-binding positions include 75-78, 86-90, and R147; these read QWFR and ELSGR. A ThyX motif motif is present at residues 78–88; it reads RHRIASYNELS. FAD-binding positions include 163–165 and N169; that span reads NAR. R174 serves as a coordination point for dUMP. The active-site Involved in ionization of N3 of dUMP, leading to its activation is R174.

Belongs to the thymidylate synthase ThyX family. In terms of assembly, homotetramer. It depends on FAD as a cofactor.

It carries out the reaction dUMP + (6R)-5,10-methylene-5,6,7,8-tetrahydrofolate + NADPH + H(+) = dTMP + (6S)-5,6,7,8-tetrahydrofolate + NADP(+). The enzyme catalyses dUMP + formaldehyde + NADPH + H(+) = dTMP + NADP(+) + H2O. Its pathway is pyrimidine metabolism; dTTP biosynthesis. Its function is as follows. Catalyzes the reductive methylation of 2'-deoxyuridine-5'-monophosphate (dUMP or deoxyuridylate) to 2'-deoxythymidine-5'-monophosphate (dTMP or deoxythymidylate) while utilizing 5,10-methylenetetrahydrofolate (mTHF) as the methylene donor, and NAD(P)H and FADH(2) as the reductant. This reaction is a critical step in DNA biosynthesis. Can also use formaldehyde instead of mTHF as a direct methylene donor for dTMP synthesis. However, the tighter binding of ThyX to mTHF (KD of 4 uM) compared to formaldehyde (KD of 20 mM) confirms that methylene tetrahydrofolate acts as the biological carbon donor for ThyX, serving as a formaldehyde carrier/transporter and thus avoiding genotoxic effects. The chain is Flavin-dependent thymidylate synthase from Thermotoga maritima (strain ATCC 43589 / DSM 3109 / JCM 10099 / NBRC 100826 / MSB8).